The chain runs to 369 residues: Beta-1,4-galactosyltransferase 2 (369 aa).

The Cytoplasmic portion of the chain corresponds to 1-15 (MSRLLGGTLERVCKA). Residues 16-36 (VLLLCLLHFLVAVILYFDVYA) form a helical; Signal-anchor for type II membrane protein membrane-spanning segment. The Lumenal portion of the chain corresponds to 37 to 369 (QHLAFFSRFS…GQPMSWLTQG (333 aa)). The segment covering 58-73 (ASSSTNCSRPNATAAS) has biased composition (polar residues). Residues 58–90 (ASSSTNCSRPNATAASSGLPEVPSARPGPTAPV) form a disordered region. 2 N-linked (GlcNAc...) asparagine glycosylation sites follow: Asn-63 and Asn-68. Cys-94 and Cys-136 are disulfide-bonded. Residues 147-151 (PFRHR), 186-188 (FNR), 214-215 (VD), and Trp-275 each bind UDP-alpha-D-galactose. Residues Cys-208 and Cys-227 are joined by a disulfide bond. Asp-215 is a binding site for Mn(2+). 277–280 (GEDD) is an N-acetyl-D-glucosamine binding site. His-308 is a Mn(2+) binding site. 308–310 (HDR) provides a ligand contact to UDP-alpha-D-galactose. Residue Arg-320 coordinates N-acetyl-D-glucosamine. Asn-354 is a glycosylation site (N-linked (GlcNAc...) asparagine).

This sequence belongs to the glycosyltransferase 7 family. The cofactor is Mn(2+).

It localises to the golgi apparatus. Its subcellular location is the golgi stack membrane. It catalyses the reaction D-glucose + UDP-alpha-D-galactose = lactose + UDP + H(+). The enzyme catalyses an N-acetyl-beta-D-glucosaminyl derivative + UDP-alpha-D-galactose = a beta-D-galactosyl-(1-&gt;4)-N-acetyl-beta-D-glucosaminyl derivative + UDP + H(+). The catalysed reaction is N-acetyl-D-glucosamine + UDP-alpha-D-galactose = beta-D-galactosyl-(1-&gt;4)-N-acetyl-D-glucosamine + UDP + H(+). The protein operates within protein modification; protein glycosylation. Responsible for the synthesis of complex-type N-linked oligosaccharides in many glycoproteins as well as the carbohydrate moieties of glycolipids. Can produce lactose. This Mus musculus (Mouse) protein is Beta-1,4-galactosyltransferase 2.